The following is a 786-amino-acid chain: Cyclin-F (786 aa).

The Nuclear localization signal 1 motif lies at 20–28 (KRRIRRRPR). The 48-residue stretch at 29-76 (NLTILSLPEDVLFHILKWLSVEDILAVRAVHSQLKDLVDNHASVWACA) folds into the F-box domain. Residues 288–405 (QASQAVSKQQ…EIVSALEGKI (118 aa)) form the Cyclin N-terminal domain. Short sequence motifs (d box) lie at residues 310-313 (RYIL), 343-346 (RRRL), 349-352 (RYRL), and 351-354 (RLQL). 2 disordered regions span residues 564-593 (SPSG…TAEL) and 675-738 (TQIP…HTQP). The Nuclear localization signal 2 signature appears at 568–574 (RRTKRKR). A PEST region spans residues 582–766 (RGSFVTTPTA…ESSVPQQQVK (185 aa)). Residues 697-714 (VTTSGYSSVSTASPTSSV) show a composition bias toward low complexity. A compositionally biased stretch (polar residues) spans 723 to 738 (QPTSVLSLDSDSHTQP). The D box 5 motif lies at 767–770 (RINL).

Belongs to the cyclin family. Cyclin AB subfamily. In terms of assembly, component of the SCF(CCNF) complex consisting of CUL1, RBX1, SKP1 and CCNF. Interacts with SKP1. Interacts with CUL1. Interacts with CCNB1; interaction is required for nuclear localization of CCNB1. Interacts with CCP110; this interaction leads to CCP110 ubiquitination and degradation via the proteasome pathway. Interacts (via the Cyclin N-terminal domain) with MYBL2/BMYB. Interacts with FZR1/CDH1 (via N-terminus). Interacts with RRM2 (via Cy motif and when phosphorylated at 'Thr-33'); the interaction occurs exclusively in G2 and early M. Interacts with CDC6 (via Cy motif); the interaction takes place during G2 and M phase. In terms of processing, degraded when the spindle assembly checkpoint is activated during the G2-M transition. Degradation depends on the C-terminal PEST sequence. Phosphorylated just before cells enter into mitosis. Post-translationally, ubiquitinated by the anaphase-promoting complex (APC/C); leading to its degradation by the proteasome. In terms of tissue distribution, widely expressed, with expression detected in the heart, brain, placenta, lung, liver, skeletal muscle, kidney and pancreas.

The protein resides in the nucleus. It localises to the cytoplasm. The protein localises to the perinuclear region. Its subcellular location is the cytoskeleton. It is found in the microtubule organizing center. The protein resides in the centrosome. It localises to the centriole. Functionally, substrate recognition component of a SCF (SKP1-CUL1-F-box protein) E3 ubiquitin-protein ligase complex which mediates the ubiquitination and subsequent proteasomal degradation of target proteins. The SCF(CCNF) E3 ubiquitin-protein ligase complex is an integral component of the ubiquitin proteasome system (UPS) and links proteasome degradation to the cell cycle. Mediates the substrate recognition and the proteasomal degradation of various target proteins involved in the regulation of cell cycle progression and in the maintenance of genome stability. Mediates the ubiquitination and proteasomal degradation of CP110 during G2 phase, thereby acting as an inhibitor of centrosome reduplication. In G2, mediates the ubiquitination and subsequent degradation of ribonucleotide reductase RRM2, thereby maintaining a balanced pool of dNTPs and genome integrity. In G2, mediates the ubiquitination and proteasomal degradation of CDC6, thereby suppressing DNA re-replication and preventing genome instability. Involved in the ubiquitination and degradation of the substrate adapter CDH1 of the anaphase-promoting complex (APC/C), thereby acting as an antagonist of APC/C in regulating G1 progression and S phase entry. May play a role in the G2 cell cycle checkpoint control after DNA damage, possibly by promoting the ubiquitination of MYBL2/BMYB. This is Cyclin-F (CCNF) from Homo sapiens (Human).